The chain runs to 116 residues: Beta-2-microglobulin (116 aa).

An N-terminal signal peptide occupies residues 1 to 19 (MRAIITFALFCVLYITVQA). One can recognise an Ig-like C1-type domain in the interval 24–111 (PKVQVYSHFP…RHMSNTNAYS (88 aa)). Residues Cys44 and Cys99 are joined by a disulfide bond.

This sequence belongs to the beta-2-microglobulin family. In terms of assembly, heterodimer of an alpha chain and a beta chain. Beta-2-microglobulin is the beta-chain of major histocompatibility complex class I molecules.

It localises to the secreted. Component of the class I major histocompatibility complex (MHC). Involved in the presentation of peptide antigens to the immune system. The sequence is that of Beta-2-microglobulin (b2m) from Labeobarbus intermedius (Lake tana barbels).